Here is a 251-residue protein sequence, read N- to C-terminus: MNLVSISINEDNYIWLLYNNDKNCIIVDPGEFISIHNICKKKKLTPVAIFLTHHHHDHVDGVESLKTYFNTPVYGPKETIKYGTTKIVKEGDEIFLLNKCFKVFELPGHTLGHVGFYSPPWFFCGDTLFSAGCGRLFEGSAKDMYFSIKKINSLPPNTLICAGHEYTLQNLNFAISVFPKNTILSMYKKKVEKLNFYKKPTLPSALYLERQINIFLNPYNFEFKGELKRLLLQEEWVLFKKLRDMKNNFIY.

Zn(2+) is bound by residues histidine 53, histidine 55, aspartate 57, histidine 58, histidine 109, aspartate 126, and histidine 164.

The protein belongs to the metallo-beta-lactamase superfamily. Glyoxalase II family. As to quaternary structure, monomer. It depends on Zn(2+) as a cofactor.

It carries out the reaction an S-(2-hydroxyacyl)glutathione + H2O = a 2-hydroxy carboxylate + glutathione + H(+). It participates in secondary metabolite metabolism; methylglyoxal degradation; (R)-lactate from methylglyoxal: step 2/2. Its function is as follows. Thiolesterase that catalyzes the hydrolysis of S-D-lactoyl-glutathione to form glutathione and D-lactic acid. This chain is Hydroxyacylglutathione hydrolase, found in Wigglesworthia glossinidia brevipalpis.